We begin with the raw amino-acid sequence, 493 residues long: Angiopoietin-related protein 2 (493 aa).

The signal sequence occupies residues 1-22; the sequence is MRPLCVTCWWLGLLAAMGAVAG. Coiled-coil stretches lie at residues 76–115 and 152–206; these read PEVL…VDGG and ALEL…HCQR. Residues Asn-164 and Asn-192 are each glycosylated (N-linked (GlcNAc...) asparagine). Residues 269–489 form the Fibrinogen C-terminal domain; that stretch reads DKPSGPWRDC…KVVMMIRPNP (221 aa). Cystine bridges form between Cys-278/Cys-307 and Cys-430/Cys-443.

In terms of processing, N-glycosylated. As to expression, widely expressed in heart, small intestine, spleen and stomach. Also found in lower levels in colon, ovary, adrenal gland, skeletal muscle and in prostate.

Its subcellular location is the secreted. Its function is as follows. Induces sprouting in endothelial cells through an autocrine and paracrine action. The sequence is that of Angiopoietin-related protein 2 (ANGPTL2) from Homo sapiens (Human).